We begin with the raw amino-acid sequence, 474 residues long: MRVAIAGAGLAGLSCAKYLADAGHTPIVYERRDVLGGKVAAWKDEDGDWYETGLHIFFGAYPNMLQLFKELNIEDRLQWKSHSMIFNQPTKPGTYSRFDFPDIPAPINGVAAILSNNDMLTWEEKIKFGLGLLPAMIRGQSYVEEMDQYSWTEWLRKQNIPERVNDEVFIAMAKALNFIDPDEISATVVLTALNRFLQEKKGSMMAFLDGAPPERLCQPIVEHVQARGGDVLLNAPLKEFVLNDDSSVQAFRIAGIKGQEEQLIEADAYVSALPVDPLKLLLPDAWKAMPYFQQLDGLQGVPVINIHLWFDRKLTDIDHLLFSRSPLLSVYADMSNTCREYEDPDRSMLELVFAPAKDWIGRSDEDILAATMAEIEKLFPQHFSGENPARLRKYKIVKTPLSVYKATPGRQQYRPDQASPIANFFLTGDYTMQRYLASMEGAVLSGKLTAQAIIARQDELQRRSSGRPLAASQA.

The protein belongs to the carotenoid/retinoid oxidoreductase family.

The protein resides in the cell membrane. The catalysed reaction is 2 a plastoquinone + 15-cis-phytoene = 9,9',15-tri-cis-zeta-carotene + 2 a plastoquinol. Its pathway is carotenoid biosynthesis; lycopene biosynthesis. With respect to regulation, inhibited by the herbicide norflurazon in a non-competitive way. Its function is as follows. This enzyme converts phytoene into zeta-carotene via the intermediary of phytofluene by the symmetrical introduction of two double bonds at the C-11 and C-11' positions of phytoene. Also active with phytofluene and 1,2-epoxyphytoene as substrates. The protein is 15-cis-phytoene desaturase (pds) of Synechococcus elongatus (strain ATCC 33912 / PCC 7942 / FACHB-805) (Anacystis nidulans R2).